Reading from the N-terminus, the 599-residue chain is Elongation factor 4 (599 aa).

Residues 4 to 186 (EHIRNFSIIA…EIVKKIPPPQ (183 aa)) enclose the tr-type G domain. GTP is bound by residues 16 to 21 (DHGKST) and 133 to 136 (NKID).

Belongs to the TRAFAC class translation factor GTPase superfamily. Classic translation factor GTPase family. LepA subfamily.

The protein resides in the cell inner membrane. The enzyme catalyses GTP + H2O = GDP + phosphate + H(+). Its function is as follows. Required for accurate and efficient protein synthesis under certain stress conditions. May act as a fidelity factor of the translation reaction, by catalyzing a one-codon backward translocation of tRNAs on improperly translocated ribosomes. Back-translocation proceeds from a post-translocation (POST) complex to a pre-translocation (PRE) complex, thus giving elongation factor G a second chance to translocate the tRNAs correctly. Binds to ribosomes in a GTP-dependent manner. The chain is Elongation factor 4 from Geobacter sp. (strain M21).